Consider the following 637-residue polypeptide: Chaperone protein DnaK (637 aa).

The residue at position 198 (threonine 198) is a Phosphothreonine; by autocatalysis. A disordered region spans residues 597-637 (MYAKTSQAGAGPQPGAGPGTGGQGPGKKDEDVVDADFEEVK). Residues 608–621 (PQPGAGPGTGGQGP) are compositionally biased toward gly residues. The span at 627-637 (DVVDADFEEVK) shows a compositional bias: acidic residues.

The protein belongs to the heat shock protein 70 family.

In terms of biological role, acts as a chaperone. The polypeptide is Chaperone protein DnaK (Syntrophus aciditrophicus (strain SB)).